The sequence spans 400 residues: Acetate kinase (400 aa).

N10 serves as a coordination point for Mg(2+). Residue K17 coordinates ATP. Residue R91 coordinates substrate. D150 serves as the catalytic Proton donor/acceptor. ATP is bound by residues 210–214 (HLGNG), 285–287 (DCR), and 333–337 (GIGEN). Position 387 (E387) interacts with Mg(2+).

The protein belongs to the acetokinase family. As to quaternary structure, homodimer. It depends on Mg(2+) as a cofactor. Mn(2+) serves as cofactor.

The protein localises to the cytoplasm. It catalyses the reaction acetate + ATP = acetyl phosphate + ADP. Its pathway is metabolic intermediate biosynthesis; acetyl-CoA biosynthesis; acetyl-CoA from acetate: step 1/2. Functionally, catalyzes the formation of acetyl phosphate from acetate and ATP. Can also catalyze the reverse reaction. The chain is Acetate kinase from Serratia proteamaculans (strain 568).